The chain runs to 329 residues: Phosphate acyltransferase (329 aa).

The protein belongs to the PlsX family. In terms of assembly, homodimer. Probably interacts with PlsY.

The protein localises to the cytoplasm. The enzyme catalyses a fatty acyl-[ACP] + phosphate = an acyl phosphate + holo-[ACP]. It participates in lipid metabolism; phospholipid metabolism. Functionally, catalyzes the reversible formation of acyl-phosphate (acyl-PO(4)) from acyl-[acyl-carrier-protein] (acyl-ACP). This enzyme utilizes acyl-ACP as fatty acyl donor, but not acyl-CoA. This is Phosphate acyltransferase from Sulfurovum sp. (strain NBC37-1).